The chain runs to 251 residues: Triosephosphate isomerase (251 aa).

Position 9-11 (9-11 (NWK)) interacts with substrate. Residue His-94 is the Electrophile of the active site. The active-site Proton acceptor is the Glu-166. Substrate-binding positions include Gly-172, Ser-211, and 232–233 (GG).

Belongs to the triosephosphate isomerase family. As to quaternary structure, homodimer.

It is found in the cytoplasm. It catalyses the reaction D-glyceraldehyde 3-phosphate = dihydroxyacetone phosphate. It functions in the pathway carbohydrate biosynthesis; gluconeogenesis. It participates in carbohydrate degradation; glycolysis; D-glyceraldehyde 3-phosphate from glycerone phosphate: step 1/1. Its function is as follows. Involved in the gluconeogenesis. Catalyzes stereospecifically the conversion of dihydroxyacetone phosphate (DHAP) to D-glyceraldehyde-3-phosphate (G3P). The sequence is that of Triosephosphate isomerase from Xanthomonas axonopodis pv. citri (strain 306).